Reading from the N-terminus, the 551-residue chain is Adenine deaminase (551 aa).

It belongs to the metallo-dependent hydrolases superfamily. Adenine deaminase family. It depends on Mn(2+) as a cofactor.

The catalysed reaction is adenine + H2O + H(+) = hypoxanthine + NH4(+). This chain is Adenine deaminase, found in Methanosarcina barkeri (strain Fusaro / DSM 804).